The primary structure comprises 170 residues: Bifunctional protein PyrR (170 aa).

Positions 90-102 (LVLVDDVLMSGRT) match the PRPP-binding motif.

It belongs to the purine/pyrimidine phosphoribosyltransferase family. PyrR subfamily.

The enzyme catalyses UMP + diphosphate = 5-phospho-alpha-D-ribose 1-diphosphate + uracil. Functionally, regulates the transcription of the pyrimidine nucleotide (pyr) operon in response to exogenous pyrimidines. Also displays a weak uracil phosphoribosyltransferase activity which is not physiologically significant. This Pseudomonas paraeruginosa (strain DSM 24068 / PA7) (Pseudomonas aeruginosa (strain PA7)) protein is Bifunctional protein PyrR.